We begin with the raw amino-acid sequence, 80 residues long: CLAVATA3/ESR (CLE)-related protein 40 (80 aa).

The N-terminal stretch at 1-25 is a signal peptide; it reads MAAMKYKGSVFIILVILLLSSSLLA. Residues 45–80 form a disordered region; sequence MKKEKKIDGGTANEVEERQVPTGSDPLHHKHIPFTP. Pro-65 is subject to Hydroxyproline.

Belongs to the CLV3/ESR signal peptide family. As to expression, mostly expressed at low levels in stems and apex, and, to a lower extent, in roots, seedlings, leaves, flowers, siliques and pollen.

It localises to the secreted. The protein resides in the extracellular space. Functionally, extracellular signal peptide secreted by differentiated root cells that regulates root cell fate. Acts with ACR4 as a ligand-receptor pair in a signal transduction pathway, coordinating movement of the root tip and organization of cell divisions in the root meristem. Promotes cell differentiation in the distal root meristem in a dose-dependent manner, especially the transition from columella stem cells (CSC) daughters into columella cells (CCs). Induces ACR4 expression in root quiescent center (QC). Involved in WUX5 QC-specific expression pattern regulation. Regulates the transition of protophloem cells from proliferation to differentiation, thus impinging on postembryonic growth capacity of the root meristem; this signaling pathway requires CRN and CLV2. This is CLAVATA3/ESR (CLE)-related protein 40 from Arabidopsis thaliana (Mouse-ear cress).